The sequence spans 142 residues: Large ribosomal subunit protein uL13 (142 aa).

Belongs to the universal ribosomal protein uL13 family. As to quaternary structure, part of the 50S ribosomal subunit.

Functionally, this protein is one of the early assembly proteins of the 50S ribosomal subunit, although it is not seen to bind rRNA by itself. It is important during the early stages of 50S assembly. This Methylococcus capsulatus (strain ATCC 33009 / NCIMB 11132 / Bath) protein is Large ribosomal subunit protein uL13.